We begin with the raw amino-acid sequence, 1438 residues long: DNA polymerase III PolC-type (1438 aa).

In terms of domain architecture, Exonuclease spans 422 to 578; sequence YVVFDVETTG…YDTESTAYIF (157 aa).

This sequence belongs to the DNA polymerase type-C family. PolC subfamily.

It is found in the cytoplasm. It catalyses the reaction DNA(n) + a 2'-deoxyribonucleoside 5'-triphosphate = DNA(n+1) + diphosphate. In terms of biological role, required for replicative DNA synthesis. This DNA polymerase also exhibits 3' to 5' exonuclease activity. The protein is DNA polymerase III PolC-type of Staphylococcus haemolyticus (strain JCSC1435).